We begin with the raw amino-acid sequence, 87 residues long: Keratin-associated protein 19-1 (87 aa).

The interval 6–72 is 21 X 2 AA repeats of G-[YCGS]; sequence GYSGGLGYGY…SSYGGYGCGC (67 aa).

This sequence belongs to the KRTAP type 19 family. In terms of assembly, interacts with hair keratins. In terms of tissue distribution, strong expression in narrowly defined pattern restricted to the lower and middle cortical regions of the hair shaft in both developing and cycling hair. During hair follicle regression (catagen), expression levels decrease until expression is no longer detectable in follicles at resting stage (telogen).

Its function is as follows. In the hair cortex, hair keratin intermediate filaments are embedded in an interfilamentous matrix, consisting of hair keratin-associated proteins (KRTAP), which are essential for the formation of a rigid and resistant hair shaft through their extensive disulfide bond cross-linking with abundant cysteine residues of hair keratins. The matrix proteins include the high-sulfur and high-glycine-tyrosine keratins. The polypeptide is Keratin-associated protein 19-1 (Krtap19-1) (Mus musculus (Mouse)).